A 284-amino-acid polypeptide reads, in one-letter code: Bifunctional protein FolD (284 aa).

NADP(+)-binding positions include 165–167 (GRS), serine 190, and valine 231.

It belongs to the tetrahydrofolate dehydrogenase/cyclohydrolase family. In terms of assembly, homodimer.

The enzyme catalyses (6R)-5,10-methylene-5,6,7,8-tetrahydrofolate + NADP(+) = (6R)-5,10-methenyltetrahydrofolate + NADPH. It catalyses the reaction (6R)-5,10-methenyltetrahydrofolate + H2O = (6R)-10-formyltetrahydrofolate + H(+). The protein operates within one-carbon metabolism; tetrahydrofolate interconversion. Catalyzes the oxidation of 5,10-methylenetetrahydrofolate to 5,10-methenyltetrahydrofolate and then the hydrolysis of 5,10-methenyltetrahydrofolate to 10-formyltetrahydrofolate. The protein is Bifunctional protein FolD of Brevibacillus brevis (strain 47 / JCM 6285 / NBRC 100599).